The chain runs to 396 residues: Smad nuclear-interacting protein 1 (396 aa).

The span at 1-10 (MKAVKSERER) shows a compositional bias: basic and acidic residues. The disordered stretch occupies residues 1 to 227 (MKAVKSERER…VPAKEKPSFE (227 aa)). A Glycyl lysine isopeptide (Lys-Gly) (interchain with G-Cter in SUMO); alternate cross-link involves residue K30. K30 participates in a covalent cross-link: Glycyl lysine isopeptide (Lys-Gly) (interchain with G-Cter in SUMO1); alternate. K30 participates in a covalent cross-link: Glycyl lysine isopeptide (Lys-Gly) (interchain with G-Cter in SUMO2); alternate. 4 positions are modified to phosphoserine: S35, S49, S52, and S54. At T57 the chain carries Phosphothreonine. Phosphoserine occurs at positions 58 and 99. Positions 77 to 105 (PPKKKNKASGRRSKSPRSKRNRSPHHSTV) are enriched in basic residues. Residues 107–142 (VKQEREDHPRRGREDRQHREPSEQEHRRARNSDRDR) show a composition bias toward basic and acidic residues. K108 participates in a covalent cross-link: Glycyl lysine isopeptide (Lys-Gly) (interchain with G-Cter in SUMO2). At S153 the chain carries Phosphoserine. Residues 165–196 (RDRDTQNLQAQEEEREFYNARRREHRQRNDVG) are a coiled coil. Position 202 is a phosphoserine (S202). Positions 213–225 (NKEKEVPAKEKPS) are enriched in basic and acidic residues. A Glycyl lysine isopeptide (Lys-Gly) (interchain with G-Cter in SUMO2) cross-link involves residue K223. Positions 281 to 344 (YLLGRHRRIA…NGTFLNNKRI (64 aa)) constitute an FHA domain. Basic and acidic residues predominate over residues 373 to 382 (SSDTSEIDRK). The segment at 373 to 396 (SSDTSEIDRKDDEDEEEEEEVSDS) is disordered. A compositionally biased stretch (acidic residues) spans 383 to 396 (DDEDEEEEEEVSDS). Residue S394 is modified to Phosphoserine.

Component of activated spliceosome complexes. Component of the minor spliceosome, which splices U12-type introns. Binds SMAD4 and CREBBP/EP300. Binds the SMAD1/OAZ1/PSMB4 complex. Interacts with DROSHA and SMARCA4. Component of the SNARP complex which consists at least of SNIP1, SNW1, THRAP3, BCLAF1 and PNN. Degraded by the proteasome upon binding to the SMAD1/OAZ1/PSMB4 complex. Ubiquitous, with highest expression in heart and skeletal muscle.

It is found in the nucleus. Required for pre-mRNA splicing as component of the spliceosome. As a component of the minor spliceosome, involved in the splicing of U12-type introns in pre-mRNAs. Down-regulates NF-kappa-B signaling by competing with RELA for CREBBP/EP300 binding. Involved in the microRNA (miRNA) biogenesis. May be involved in cyclin-D1/CCND1 mRNA stability through the SNARP complex which associates with both the 3'end of the CCND1 gene and its mRNA. The sequence is that of Smad nuclear-interacting protein 1 (SNIP1) from Homo sapiens (Human).